A 505-amino-acid polypeptide reads, in one-letter code: Maturase K (505 aa).

Belongs to the intron maturase 2 family. MatK subfamily.

It localises to the plastid. Its subcellular location is the chloroplast. Its function is as follows. Usually encoded in the trnK tRNA gene intron. Probably assists in splicing its own and other chloroplast group II introns. This chain is Maturase K, found in Morus indica (Mulberry).